The following is a 91-amino-acid chain: UPF0250 protein HCH_05838 (91 aa).

It belongs to the UPF0250 family.

The protein is UPF0250 protein HCH_05838 of Hahella chejuensis (strain KCTC 2396).